The primary structure comprises 141 residues: MRQRTIVCPLIQNDGCYLLCKMVDNRGVFPGQWALSGGGVEPGERIEEALRREIREELGEQLILSDITPWTFRDDIRVKTYADGRQEEIYMIYLIFDCVSANRDICINDEFQDYAWVKPEELALYDLNVATRHTLALKGLL.

Positions 1 to 141 constitute a Nudix hydrolase domain; the sequence is MRQRTIVCPL…RHTLALKGLL (141 aa). A Nudix box motif is present at residues 38 to 59; that stretch reads GGVEPGERIEEALRREIREELG.

This sequence belongs to the Nudix hydrolase family. NudI subfamily. As to quaternary structure, monomer. Mg(2+) serves as cofactor.

It carries out the reaction a ribonucleoside 5'-triphosphate + H2O = a ribonucleoside 5'-phosphate + diphosphate + H(+). The catalysed reaction is a 2'-deoxyribonucleoside 5'-triphosphate + H2O = a 2'-deoxyribonucleoside 5'-phosphate + diphosphate + H(+). It catalyses the reaction dUTP + H2O = dUMP + diphosphate + H(+). The enzyme catalyses dTTP + H2O = dTMP + diphosphate + H(+). It carries out the reaction dCTP + H2O = dCMP + diphosphate + H(+). Its function is as follows. Catalyzes the hydrolysis of nucleoside triphosphates, with a preference for pyrimidine deoxynucleoside triphosphates (dUTP, dTTP and dCTP). The protein is Nucleoside triphosphatase NudI of Salmonella heidelberg (strain SL476).